We begin with the raw amino-acid sequence, 193 residues long: Histone H5 (193 aa).

Residues 1–11 show a composition bias toward pro residues; that stretch reads TDSPIPAPAPA. Disordered stretches follow at residues 1–29 and 80–193; these read TDSP…HPTY and GVLK…PKKK. Basic residues predominate over residues 13 to 24; that stretch reads KPKRARAPRKPA. An H15 domain is found at 25 to 98; it reads SHPTYSEMIA…GASGSFRLAK (74 aa). A compositionally biased stretch (basic residues) spans 104–193; it reads RSPAGRKKKK…SGARKSPKKK (90 aa).

The protein belongs to the histone H1/H5 family. In terms of tissue distribution, erythroid cells.

Its subcellular location is the nucleus. It is found in the chromosome. Its function is as follows. Histone H5 performs the same function as H1, being necessary for the condensation of nucleosome chains into higher order structures, and replaces histone H1 in certain cells. This is Histone H5 from Anser anser anser (Western greylag goose).